The following is a 588-amino-acid chain: Urease subunit alpha (588 aa).

Positions 149 to 588 constitute a Urease domain; sequence GGIDTHIHFI…LPMAQRYFLF (440 aa). Residues histidine 154, histidine 156, and lysine 237 each coordinate Ni(2+). Lysine 237 carries the post-translational modification N6-carboxylysine. Histidine 239 provides a ligand contact to substrate. The Ni(2+) site is built by histidine 266 and histidine 292. The active-site Proton donor is the histidine 340. Residue aspartate 380 coordinates Ni(2+).

The protein belongs to the metallo-dependent hydrolases superfamily. Urease alpha subunit family. Heterotrimer of UreA (gamma), UreB (beta) and UreC (alpha) subunits. Three heterotrimers associate to form the active enzyme. Ni cation serves as cofactor. Post-translationally, carboxylation allows a single lysine to coordinate two nickel ions.

It is found in the cytoplasm. It catalyses the reaction urea + 2 H2O + H(+) = hydrogencarbonate + 2 NH4(+). The protein operates within nitrogen metabolism; urea degradation; CO(2) and NH(3) from urea (urease route): step 1/1. This Opitutus terrae (strain DSM 11246 / JCM 15787 / PB90-1) protein is Urease subunit alpha.